The chain runs to 387 residues: Alpha-maltose-1-phosphate synthase (387 aa).

This sequence belongs to the glycosyltransferase group 1 family.

It carries out the reaction ADP-alpha-D-glucose + alpha-D-glucose 1-phosphate = alpha-maltose 1-phosphate + ADP + H(+). The protein operates within glycan biosynthesis; glycogen biosynthesis. Its function is as follows. Involved in the biosynthesis of the maltose-1-phosphate (M1P) building block required for alpha-glucan production by the key enzyme GlgE. Catalyzes the formation of an alpha-1,4 linkage between glucose from ADP-glucose and glucose 1-phosphate (G1P) to yield maltose-1-phosphate (M1P). The polypeptide is Alpha-maltose-1-phosphate synthase (Mycolicibacterium smegmatis (strain ATCC 700084 / mc(2)155) (Mycobacterium smegmatis)).